A 633-amino-acid polypeptide reads, in one-letter code: Sodium- and chloride-dependent glycine transporter 1 (633 aa).

Topologically, residues M1 to E30 are cytoplasmic. A run of 3 helical transmembrane segments spans residues F31–L51, G58–M78, and Y113–M133. The Extracellular portion of the chain corresponds to N134 to E208. 4 N-linked (GlcNAc...) asparagine glycosylation sites follow: N158, N164, N173, and N179. Helical transmembrane passes span V209–I229, V238–I258, V283–I303, S330–V350, L373–L393, I429–L449, Y453–I473, L493–F513, and I533–F553. Over K554–V633 the chain is Cytoplasmic. Positions R588–V633 are disordered. Polar residues-rich tracts occupy residues Q591–E602 and L617–V633.

The protein belongs to the sodium:neurotransmitter symporter (SNF) (TC 2.A.22) family. SLC6A9 subfamily. First expressed in early tailbud stage embryos in the midbrain and anterior spinal cord, and weakly in the hindbrain. By late tailbud stages, expression extends posteriorly in the spinal cord to appear in between somites. Expressed in the forebrain, retina, between the somites and in the blood islands by the swimming tadpole stages.

The protein resides in the cell membrane. The catalysed reaction is glycine(out) + chloride(out) + 2 Na(+)(out) = glycine(in) + chloride(in) + 2 Na(+)(in). Sodium- and chloride-dependent glycine transporter which is essential for regulating glycine concentrations at inhibitory glycinergic synapses. The sequence is that of Sodium- and chloride-dependent glycine transporter 1 from Xenopus laevis (African clawed frog).